A 754-amino-acid polypeptide reads, in one-letter code: Leucine-rich repeat-containing protein 36 (754 aa).

LRR repeat units lie at residues 51–72 and 73–94; these read NLRSLDLSRNLITSLKGIQYLC and SLQDLNLYYNNIPSLVEVSRLQ. One can recognise an LRRCT domain in the interval 107–146; that stretch reads NPVVRKDTDYRLFAVYTLQTLEKLDDRTVREGERKAAKLH. Basic and acidic residues predominate over residues 241 to 255; sequence REMPSDNHQEDEFRH. The interval 241 to 270 is disordered; sequence REMPSDNHQEDEFRHYSPRQSTVRSPEKMT. The stretch at 600-680 forms a coiled coil; sequence NDMESLKQKL…EKTVAILHES (81 aa). The disordered stretch occupies residues 702-734; that stretch reads YSGKALLPPEKGHHLGRSSPFGKSTLSSSSPVA. Positions 722–732 are enriched in polar residues; that stretch reads FGKSTLSSSSP.

This chain is Leucine-rich repeat-containing protein 36 (LRRC36), found in Homo sapiens (Human).